A 343-amino-acid polypeptide reads, in one-letter code: Phenylalanine--tRNA ligase alpha subunit (343 aa).

Glu256 lines the Mg(2+) pocket.

The protein belongs to the class-II aminoacyl-tRNA synthetase family. Phe-tRNA synthetase alpha subunit type 1 subfamily. In terms of assembly, tetramer of two alpha and two beta subunits. Mg(2+) is required as a cofactor.

Its subcellular location is the cytoplasm. It catalyses the reaction tRNA(Phe) + L-phenylalanine + ATP = L-phenylalanyl-tRNA(Phe) + AMP + diphosphate + H(+). The chain is Phenylalanine--tRNA ligase alpha subunit from Aster yellows witches'-broom phytoplasma (strain AYWB).